The chain runs to 113 residues: Dolichyl-diphosphooligosaccharide--protein glycosyltransferase subunit dad-1 (113 aa).

Residues 1-32 are Cytoplasmic-facing; that stretch reads MAAQVVPVLSKLFDDYQKTTSSKLKIIDAYMT. Residues 33–53 traverse the membrane as a helical segment; the sequence is YILFTGIFQFIYCLLVGTFPF. The Lumenal segment spans residues 54–55; that stretch reads NS. A helical membrane pass occupies residues 56–78; the sequence is FLSGFISTVTSFVLASCLRMQVN. The Cytoplasmic segment spans residues 79-92; that stretch reads QENRSEFTAVSTER. A helical transmembrane segment spans residues 93–113; it reads AFADFIFANLILHLVVVNFLG.

This sequence belongs to the DAD/OST2 family. In terms of assembly, component of the oligosaccharyltransferase (OST) complex.

The protein resides in the endoplasmic reticulum membrane. It functions in the pathway protein modification; protein glycosylation. Its function is as follows. Subunit of the oligosaccharyl transferase (OST) complex that catalyzes the initial transfer of a defined glycan (Glc(3)Man(9)GlcNAc(2) in eukaryotes) from the lipid carrier dolichol-pyrophosphate to an asparagine residue within an Asn-X-Ser/Thr consensus motif in nascent polypeptide chains, the first step in protein N-glycosylation. N-glycosylation occurs cotranslationally and the complex associates with the Sec61 complex at the channel-forming translocon complex that mediates protein translocation across the endoplasmic reticulum (ER). All subunits are required for a maximal enzyme activity. Possesses cell death-inhibiting activity. Suppresses some programmed cell death in C.elegans. In Caenorhabditis elegans, this protein is Dolichyl-diphosphooligosaccharide--protein glycosyltransferase subunit dad-1.